A 464-amino-acid chain; its full sequence is Soluble pyridine nucleotide transhydrogenase (464 aa).

Residue 35–44 coordinates FAD; that stretch reads DSRRVVGGNC.

Belongs to the class-I pyridine nucleotide-disulfide oxidoreductase family. FAD is required as a cofactor.

The protein resides in the cytoplasm. The enzyme catalyses NAD(+) + NADPH = NADH + NADP(+). In terms of biological role, conversion of NADPH, generated by peripheral catabolic pathways, to NADH, which can enter the respiratory chain for energy generation. This chain is Soluble pyridine nucleotide transhydrogenase, found in Pseudomonas paraeruginosa (strain DSM 24068 / PA7) (Pseudomonas aeruginosa (strain PA7)).